The sequence spans 118 residues: ATP synthase subunit g, mitochondrial (118 aa).

Belongs to the ATPase g subunit family. F-type ATPases have 2 components, CF(1) - the catalytic core - and CF(0) - the membrane proton channel.

It localises to the mitochondrion membrane. Functionally, mitochondrial membrane ATP synthase (F(1)F(0) ATP synthase or Complex V) produces ATP from ADP in the presence of a proton gradient across the membrane which is generated by electron transport complexes of the respiratory chain. F-type ATPases consist of two structural domains, F(1) - containing the extramembraneous catalytic core, and F(0) - containing the membrane proton channel, linked together by a central stalk and a peripheral stalk. During catalysis, ATP synthesis in the catalytic domain of F(1) is coupled via a rotary mechanism of the central stalk subunits to proton translocation. Part of the complex F(0) domain. Minor subunit located with subunit a in the membrane. This Schizosaccharomyces pombe (strain 972 / ATCC 24843) (Fission yeast) protein is ATP synthase subunit g, mitochondrial (atp20).